The following is an 816-amino-acid chain: Subtilisin-like protease SBT2.6 (816 aa).

Positions 1–19 are cleaved as a signal peptide; it reads MDIGCKVLVFFTCFLTVTA. The propeptide at 20–126 is activation peptide; it reads EIYIVTMEGE…VDRDWKVRKL (107 aa). The Inhibitor I9 domain occupies 22 to 124; it reads YIVTMEGEPI…KSVDRDWKVR (103 aa). The Peptidase S8 domain maps to 120-672; the sequence is DWKVRKLTTH…SGHVNPSAAL (553 aa). Active-site charge relay system residues include Asp-160 and His-235. Residues 418–492 form the PA domain; the sequence is DCQKPEVLNK…SCIPGILITD (75 aa). Asn-504 and Asn-578 each carry an N-linked (GlcNAc...) asparagine glycan. Catalysis depends on Ser-597, which acts as the Charge relay system. Residue Asn-702 is glycosylated (N-linked (GlcNAc...) asparagine).

The protein belongs to the peptidase S8 family.

Its subcellular location is the secreted. In Arabidopsis thaliana (Mouse-ear cress), this protein is Subtilisin-like protease SBT2.6.